We begin with the raw amino-acid sequence, 1058 residues long: Protein translocase subunit SECA2, chloroplastic (1058 aa).

The N-terminal 58 residues, 1-58, are a transit peptide targeting the chloroplast; it reads MGSVSNLVSPNICHPAPPCLTSRSNKFPWTKPISGLLFYRSVTPIKRCHLVRRSCVVS. 167–174 lines the ATP pocket; sequence MKTGEGKT.

Belongs to the SecA family. Part of a second Sec protein translocation apparatus. Interacts probably with SCY2.

The protein localises to the plastid. It is found in the chloroplast membrane. The enzyme catalyses ATP + H2O + chloroplast-proteinSide 1 = ADP + phosphate + chloroplast-proteinSide 2.. Its function is as follows. Involved in protein export. Probably interacts with other proteins to allow the postimport or conservative sorting pathway for inner membrane proteins in plastids. May have a central role in coupling the hydrolysis of ATP to the transfer of proteins across the membrane. This chain is Protein translocase subunit SECA2, chloroplastic, found in Arabidopsis thaliana (Mouse-ear cress).